The sequence spans 443 residues: Cell division protein FtsA (443 aa).

Belongs to the FtsA/MreB family. In terms of assembly, self-interacts. Interacts with FtsZ.

The protein resides in the cell inner membrane. In terms of biological role, cell division protein that is involved in the assembly of the Z ring. May serve as a membrane anchor for the Z ring. This Agrobacterium fabrum (strain C58 / ATCC 33970) (Agrobacterium tumefaciens (strain C58)) protein is Cell division protein FtsA.